We begin with the raw amino-acid sequence, 477 residues long: Glycogen synthase (477 aa).

Lys-15 provides a ligand contact to ADP-alpha-D-glucose.

It belongs to the glycosyltransferase 1 family. Bacterial/plant glycogen synthase subfamily.

The enzyme catalyses [(1-&gt;4)-alpha-D-glucosyl](n) + ADP-alpha-D-glucose = [(1-&gt;4)-alpha-D-glucosyl](n+1) + ADP + H(+). The protein operates within glycan biosynthesis; glycogen biosynthesis. Functionally, synthesizes alpha-1,4-glucan chains using ADP-glucose. The sequence is that of Glycogen synthase from Streptococcus pneumoniae (strain JJA).